The chain runs to 263 residues: Small ribosomal subunit protein eS4 (263 aa).

The S4 RNA-binding domain maps to 42–104; that stretch reads LPLIIFLRNR…TGENFRLIYD (63 aa).

It belongs to the eukaryotic ribosomal protein eS4 family.

The polypeptide is Small ribosomal subunit protein eS4 (rps4) (Ictalurus punctatus (Channel catfish)).